The sequence spans 203 residues: Thymidylate kinase (203 aa).

Residue 10–17 (GIDGAGKS) participates in ATP binding.

This sequence belongs to the thymidylate kinase family.

It carries out the reaction dTMP + ATP = dTDP + ADP. In terms of biological role, phosphorylation of dTMP to form dTDP in both de novo and salvage pathways of dTTP synthesis. This is Thymidylate kinase from Cupriavidus pinatubonensis (strain JMP 134 / LMG 1197) (Cupriavidus necator (strain JMP 134)).